Consider the following 698-residue polypeptide: MIPVEALTPFEARIEHAELVETIARWDEAYHAKDAPEVPDDVYDGAKRRLARIEGRFPELAAKSPIRDKVGAAPSEGFGKLVHAVPMLSLDNAFAPEDVAEFDAKVRRFLGLGDEAPLAYVAEPKIDGLSINLRYEGGRFVSAATRGDGAEGEDVTRNLETFPATQLPRTLGPDAPAVIEIRGEVYMTKADFLALNQRQEAAGEKLFANPRNAAAGSLRQLDPKVTASRPLSLFAYAMGEASAPPAASHWEYLERLKAWGFVVNPLIRRCDGVAGLLSAYESLGEARATLAYDIDGIVYKVDDIELQRRLGFVSRSPRWAIAHKFPAEQATTLLEAIDIQVGRTGALTPVARLTPVNVGGVVVSNATLHNEDEIARKDVRIGDTVIVQRAGDVIPQIVGVVPGKPRGAVPFVYPETCPVCGAHAVRPEGEVIRRCTGGLTCEAQAKERLKHFVSRNAFDIEGLGEKNIEFLWEKGWVRGPADIFRLKARNDAELLQRLENFEGWGKRSTEKLFESIKTRSAMGLERFIFALGIRQIGEATAKRLARHYGSFGAWRAAMLAGTEEARAELTSIEDIGPSVAGDLLDFFSEEHNVQAVDDLVAAMAALDGAVEDAKVIESSASPVAGKAVVFTGTLVTMTRPEAKARAEALGAKVVGSVSKKTDYVVVGADAGSKAAEAVKLGIATLSEQEWLALTGAAD.

NAD(+) contacts are provided by residues 40-44 (DDVYD), 89-90 (SL), and Glu123. Catalysis depends on Lys125, which acts as the N6-AMP-lysine intermediate. NAD(+)-binding residues include Arg146, Glu184, Lys300, and Lys324. 4 residues coordinate Zn(2+): Cys417, Cys420, Cys435, and Cys441. The BRCT domain occupies 618-698 (SSASPVAGKA…EWLALTGAAD (81 aa)).

This sequence belongs to the NAD-dependent DNA ligase family. LigA subfamily. Mg(2+) serves as cofactor. Mn(2+) is required as a cofactor.

It catalyses the reaction NAD(+) + (deoxyribonucleotide)n-3'-hydroxyl + 5'-phospho-(deoxyribonucleotide)m = (deoxyribonucleotide)n+m + AMP + beta-nicotinamide D-nucleotide.. Functionally, DNA ligase that catalyzes the formation of phosphodiester linkages between 5'-phosphoryl and 3'-hydroxyl groups in double-stranded DNA using NAD as a coenzyme and as the energy source for the reaction. It is essential for DNA replication and repair of damaged DNA. The chain is DNA ligase from Paramagnetospirillum magneticum (strain ATCC 700264 / AMB-1) (Magnetospirillum magneticum).